The chain runs to 512 residues: Kynurenine 3-monooxygenase (512 aa).

It belongs to the aromatic-ring hydroxylase family. KMO subfamily. The cofactor is FAD.

The protein resides in the mitochondrion outer membrane. It carries out the reaction L-kynurenine + NADPH + O2 + H(+) = 3-hydroxy-L-kynurenine + NADP(+) + H2O. The protein operates within cofactor biosynthesis; NAD(+) biosynthesis; quinolinate from L-kynurenine: step 1/3. Catalyzes the hydroxylation of L-kynurenine (L-Kyn) to form 3-hydroxy-L-kynurenine (L-3OHKyn). Required for synthesis of quinolinic acid. This Aspergillus clavatus (strain ATCC 1007 / CBS 513.65 / DSM 816 / NCTC 3887 / NRRL 1 / QM 1276 / 107) protein is Kynurenine 3-monooxygenase (bna4).